Consider the following 294-residue polypeptide: Proline iminopeptidase (294 aa).

Residues Pro28–Glu278 enclose the AB hydrolase-1 domain. The Nucleophile role is filled by Ser106. The active site involves Asp245. The active-site Proton donor is the His272.

This sequence belongs to the peptidase S33 family. In terms of assembly, homotrimer.

Its subcellular location is the cell envelope. It catalyses the reaction Release of N-terminal proline from a peptide.. Its activity is regulated as follows. Inhibited by 3,4-DCI, but no significant effect on enzyme activity by pepstatin A, E-64, 1,10-phenanthroline or EDTA. Releases the N-terminal proline from various substrates. Cleaves Pro-betaNA (L-prolyl-beta-naphthylamide) effectively. The chain is Proline iminopeptidase (pip) from Lactobacillus delbrueckii subsp. lactis.